The sequence spans 598 residues: MLPNIILILLIRYCSCGAGSRVYEKYGKQVQLSPATTSSYREWYDSNREHSTRNNTNVDDFQTQLKKSLENTTAAYNATFMQELIEERQRYLEKLNEGQFINDQRRLVEELLDPNYYEKTVHPKRDYTRPTRVNLSMSLYQILDVDEHMQSIEVNVWMVQHWYDEFLDWNPVDYGMINRTIVPYHQIWIPDTYLYNSEELEQKKTESLMNAQLETGHWNQKKDGAKVQLMFPAIYKLSCRMDVRWFPYDRQNCTFIISSWTHDKQTIDYWPLSSTVNLGNMARNDEWEVISFEFVRVEETFKCCTAPWVMLYAHLVIRRKPLYYMINLVVPTSIITIVAVTGFFTPTSSSSERDEKLYLGINTLLTMSVMMLMVCNQMPSTSTYVPLMSWYYIGIIMVIVVGTFLATGVLAIHGQKHYNKPISDRIRKLIYNPVVEFFILSPPTSLIDLWTEFGVISEQRHSTHLDPLLLQHMDPISHTTRADPQHFFGSISSQMCDLQSTYSYTARLATITRQYTQHAKMKALRKNQYRMSMDTSQARGVKKQKMQRRCSLEWEFLANVLDRILLTIFCGFTFAVFIILIGFDSFFTFHTDSPPKTM.

The signal sequence occupies residues 1 to 16 (MLPNIILILLIRYCSC). The Extracellular portion of the chain corresponds to 17-323 (GAGSRVYEKY…HLVIRRKPLY (307 aa)). N-linked (GlcNAc...) asparagine glycans are attached at residues Asn54, Asn71, Asn77, Asn134, Asn178, and Asn252. A helical membrane pass occupies residues 324-344 (YMINLVVPTSIITIVAVTGFF). Residues 345-356 (TPTSSSSERDEK) lie on the Cytoplasmic side of the membrane. A helical membrane pass occupies residues 357 to 377 (LYLGINTLLTMSVMMLMVCNQ). Residues 378–391 (MPSTSTYVPLMSWY) lie on the Extracellular side of the membrane. A helical membrane pass occupies residues 392-412 (YIGIIMVIVVGTFLATGVLAI). Over 413-563 (HGQKHYNKPI…WEFLANVLDR (151 aa)) the chain is Cytoplasmic. The chain crosses the membrane as a helical span at residues 564 to 584 (ILLTIFCGFTFAVFIILIGFD). At 585-598 (SFFTFHTDSPPKTM) the chain is on the extracellular side.

This sequence belongs to the ligand-gated ion channel (TC 1.A.9) family. Acetylcholine receptor (TC 1.A.9.1) subfamily.

The protein localises to the postsynaptic cell membrane. The protein resides in the cell membrane. Its function is as follows. Subunit of nicotinic acetylcholine receptor (nAChR). Involved in nAChR sensitivity to nicotine. Modulates locomotion towards the drug nicotine. This is Acetylcholine receptor subunit alpha-type acr-5 from Caenorhabditis elegans.